We begin with the raw amino-acid sequence, 83 residues long: Putative membrane protein insertion efficiency factor (83 aa).

This sequence belongs to the UPF0161 family.

Its subcellular location is the cell inner membrane. Its function is as follows. Could be involved in insertion of integral membrane proteins into the membrane. This Pelagibacter ubique (strain HTCC1062) protein is Putative membrane protein insertion efficiency factor.